The primary structure comprises 216 residues: Uracil phosphoribosyltransferase (216 aa).

5-phospho-alpha-D-ribose 1-diphosphate-binding positions include arginine 84, arginine 109, and 137 to 145 (DPMLATGNT). Uracil-binding positions include isoleucine 202 and 207–209 (GDA). Aspartate 208 serves as a coordination point for 5-phospho-alpha-D-ribose 1-diphosphate.

Belongs to the UPRTase family. Mg(2+) is required as a cofactor.

The catalysed reaction is UMP + diphosphate = 5-phospho-alpha-D-ribose 1-diphosphate + uracil. Its pathway is pyrimidine metabolism; UMP biosynthesis via salvage pathway; UMP from uracil: step 1/1. Allosterically activated by GTP. In terms of biological role, catalyzes the conversion of uracil and 5-phospho-alpha-D-ribose 1-diphosphate (PRPP) to UMP and diphosphate. This chain is Uracil phosphoribosyltransferase, found in Synechocystis sp. (strain ATCC 27184 / PCC 6803 / Kazusa).